Consider the following 395-residue polypeptide: Carbohydrate sulfotransferase 5 (395 aa).

Over 1–7 the chain is Cytoplasmic; the sequence is MRLPRFS. The helical; Signal-anchor for type II membrane protein transmembrane segment at 8 to 26 threads the bilayer; it reads STVMLSLLMVQTGILVFLV. Residues 27–395 lie on the Lumenal side of the membrane; sequence SRQVPSSPAG…ASSTEKQPES (369 aa). Residue 49 to 55 coordinates 3'-phosphoadenylyl sulfate; that stretch reads WRSGSSF. N116 and N142 each carry an N-linked (GlcNAc...) asparagine glycan. 202–210 serves as a coordination point for 3'-phosphoadenylyl sulfate; the sequence is RDPRAVLRS. Residues N229 and N305 are each glycosylated (N-linked (GlcNAc...) asparagine).

This sequence belongs to the sulfotransferase 1 family. Gal/GlcNAc/GalNAc subfamily. As to expression, expressed in cornea.

The protein localises to the golgi apparatus membrane. Functionally, sulfotransferase that utilizes 3'-phospho-5'-adenylyl sulfate (PAPS) as sulfonate donor to catalyze the transfer of sulfate to position 6 of non-reducing N-acetylglucosamine (GlcNAc) residues of keratan. Mediates sulfation of keratan in cornea. Keratan sulfate plays a central role in maintaining corneal transparency. Acts on the non-reducing terminal GlcNAc of short and long carbohydrate substrates that have poly-N-acetyllactosamine structures. May also have activity toward O-linked sugars of mucin-type acceptors. The polypeptide is Carbohydrate sulfotransferase 5 (Chst5) (Mus musculus (Mouse)).